The sequence spans 193 residues: Small ribosomal subunit protein eS7 (193 aa).

This sequence belongs to the eukaryotic ribosomal protein eS7 family.

The protein is Small ribosomal subunit protein eS7 (rps7) of Dictyostelium discoideum (Social amoeba).